The primary structure comprises 102 residues: Major basic nuclear protein 2 (102 aa).

The segment covering 1–11 (MKAMKATKKAM) has biased composition (basic residues). Positions 1-43 (MKAMKATKKAMTKTGLAEALAPKPSSARRIAPPSSRAWPPSAQ) are disordered. A compositionally biased stretch (low complexity) spans 21 to 42 (APKPSSARRIAPPSSRAWPPSA).

The protein localises to the nucleus. This chain is Major basic nuclear protein 2 (HCc2), found in Crypthecodinium cohnii (Dinoflagellate).